The chain runs to 266 residues: uncharacterized protein (266 aa).

8 helical membrane passes run 9–29, 37–57, 69–89, 123–143, 153–173, 184–204, 216–236, and 246–266; these read IAALLAVLSISMVLGIDLFIF, TMPHLGVGVLVAQLISLLVFY, LIKVNMTFAIYWAVWLLISLL, FLLMAALIAGLGCLSYLMIFT, YNPFAPILSGVILANLVLVIA, LPLAMIILLALNALAMFLFLL, SVFAYIIYFVCHFVIAAILIL, and TNSLFILLFIAVCLPLWMVFV.

Its subcellular location is the cell membrane. This is an uncharacterized protein from Haemophilus influenzae (strain ATCC 51907 / DSM 11121 / KW20 / Rd).